The sequence spans 337 residues: Neurogenic differentiation factor 6 (337 aa).

The segment at 43-82 is disordered; sequence LRGKSIKRAPGEETEKEEEEEDREEEDENGLPRRRGLRKK. The segment covering 54 to 71 has biased composition (acidic residues); sequence EETEKEEEEEDREEEDEN. The short motif at 80–86 is the Nuclear localization signal element; the sequence is RKKKTTK. A bHLH domain is found at 94-146; that stretch reads FRRQEANARERNRMHGLNDALDNLRKVVPCYSKTQKLSKIETLRLAKNYIWAL.

Efficient DNA binding requires dimerization with another bHLH protein.

Its subcellular location is the nucleus. In terms of biological role, activates E box-dependent transcription in collaboration with TCF3/E47. May be a trans-acting factor involved in the development and maintenance of the mammalian nervous system. Transactivates the promoter of its own gene. This chain is Neurogenic differentiation factor 6 (NEUROD6), found in Homo sapiens (Human).